The following is a 320-amino-acid chain: Acetyl-coenzyme A carboxylase carboxyl transferase subunit alpha (320 aa).

Positions 42–295 (IGDKAAQALK…GDAIAEAFND (254 aa)) constitute a CoA carboxyltransferase C-terminal domain.

Belongs to the AccA family. In terms of assembly, acetyl-CoA carboxylase is a heterohexamer composed of biotin carboxyl carrier protein (AccB), biotin carboxylase (AccC) and two subunits each of ACCase subunit alpha (AccA) and ACCase subunit beta (AccD).

It is found in the cytoplasm. The catalysed reaction is N(6)-carboxybiotinyl-L-lysyl-[protein] + acetyl-CoA = N(6)-biotinyl-L-lysyl-[protein] + malonyl-CoA. It functions in the pathway lipid metabolism; malonyl-CoA biosynthesis; malonyl-CoA from acetyl-CoA: step 1/1. Component of the acetyl coenzyme A carboxylase (ACC) complex. First, biotin carboxylase catalyzes the carboxylation of biotin on its carrier protein (BCCP) and then the CO(2) group is transferred by the carboxyltransferase to acetyl-CoA to form malonyl-CoA. This chain is Acetyl-coenzyme A carboxylase carboxyl transferase subunit alpha, found in Nitrobacter hamburgensis (strain DSM 10229 / NCIMB 13809 / X14).